Reading from the N-terminus, the 518-residue chain is uncharacterized protein (518 aa).

The signal sequence occupies residues 1–21; sequence MWKWKVILLFLAEMFVSGVNG. 7 N-linked (GlcNAc...) asparagine glycosylation sites follow: N30, N142, N295, N342, N362, N410, and N503. The region spanning 389 to 517 is the CUB domain; the sequence is CPPFGITNSV…RGFWVSITPQ (129 aa).

It localises to the secreted. This is an uncharacterized protein from Caenorhabditis elegans.